Reading from the N-terminus, the 131-residue chain is Aspartate 1-decarboxylase (131 aa).

Catalysis depends on S25, which acts as the Schiff-base intermediate with substrate; via pyruvic acid. S25 is modified (pyruvic acid (Ser)). T57 provides a ligand contact to substrate. The active-site Proton donor is the Y58. 73-75 (GAA) is a binding site for substrate.

The protein belongs to the PanD family. Heterooctamer of four alpha and four beta subunits. Pyruvate is required as a cofactor. In terms of processing, is synthesized initially as an inactive proenzyme, which is activated by self-cleavage at a specific serine bond to produce a beta-subunit with a hydroxyl group at its C-terminus and an alpha-subunit with a pyruvoyl group at its N-terminus.

It localises to the cytoplasm. It carries out the reaction L-aspartate + H(+) = beta-alanine + CO2. The protein operates within cofactor biosynthesis; (R)-pantothenate biosynthesis; beta-alanine from L-aspartate: step 1/1. Functionally, catalyzes the pyruvoyl-dependent decarboxylation of aspartate to produce beta-alanine. The protein is Aspartate 1-decarboxylase of Chlorobium phaeobacteroides (strain DSM 266 / SMG 266 / 2430).